The following is a 120-amino-acid chain: Protein CcdB (120 aa).

The region spanning 3 to 118 (RVLVVDDAKF…KVLEAVSRVM (116 aa)) is the Response regulatory domain. Aspartate 53 bears the 4-aspartylphosphate mark.

The polypeptide is Protein CcdB (ccdB) (Bacillus subtilis (strain 168)).